The chain runs to 492 residues: Zinc finger protein GLIS2 (492 aa).

The segment at 49 to 101 (VITPICSSPPPGFRYRDGDSPPFSSPPIVDLSLSPPSGTDSPSRSSLSPDRAA) is disordered. The interval 69-129 (PPFSSPPIVD…SPFQFFLPLG (61 aa)) is transcription activation. Low complexity predominate over residues 82-97 (SPPSGTDSPSRSSLSP). The tract at residues 138-161 (MFMSPPKENRLSLEFTEQKQLVCQ) is transcription repression. The C2H2-type 1 zinc finger occupies 158-183 (LVCQWAKCNRLFELLQELVDHVNDFH). The C2H2-type 2; degenerate zinc-finger motif lies at 192–219 (YCCHWEGCARRGRGFNARYKMLIHIRTH). 3 C2H2-type zinc fingers span residues 225 to 247 (HCCP…NRSH), 253 to 277 (YMCP…TRTH), and 283 to 307 (YYCK…IKAH). A compositionally biased stretch (basic and acidic residues) spans 423-444 (VENEKRPKGQRGDSSERTDGSK). The segment at 423–450 (VENEKRPKGQRGDSSERTDGSKLRPGSI) is disordered.

Belongs to the GLI C2H2-type zinc-finger protein family.

The protein resides in the nucleus speckle. It localises to the cytoplasm. Can act either as a transcription repressor or as a transcription activator, depending on the cell context. May be involved in neuron differentiation. The protein is Zinc finger protein GLIS2 (glis2) of Xenopus laevis (African clawed frog).